An 848-amino-acid polypeptide reads, in one-letter code: Aryl hydrocarbon receptor (848 aa).

A propeptide spanning residues 1 to 9 (MSSGANITY) is cleaved from the precursor. The segment at 1–38 (MSSGANITYASRKRRKPVQKTVKPIPAEGIKSNPSKRH) is disordered. 2 short sequence motifs (nuclear localization signal) span residues 12 to 15 (RKRR) and 36 to 41 (KRHRDR). The bHLH domain occupies 26–79 (PAEGIKSNPSKRHRDRLNTELDRLASLLPFPQDVINKLDKLSVLRLSVSYLRAK). The DNA-binding stretch occupies residues 37–65 (RHRDRLNTELDRLASLLPFPQDVINKLDK). Required for maintaining the overall integrity of the AHR:ARNT heterodimer and its transcriptional activity regions lie at residues 49–81 (LASL…AKSF), 116–124 (LLQALNGFV), and 260–262 (FAI). The Nuclear export signal motif lies at 63–71 (LDKLSVLRL). In terms of domain architecture, PAS 1 spans 116-179 (LLQALNGFVL…RQLHWALNPD (64 aa)). One can recognise a PAS 2 domain in the interval 269–336 (PSILEIRTKN…CAESHIRMIK (68 aa)). Residues 342–380 (MTVFRLFAKHSRWRWVQSNARLIYRNGRPDYIIATQRPL) form the PAC domain. Residues 421–449 (LPIRTKSNTSRKDWAPQSTPSKDSFHPSS) are disordered. The span at 436 to 449 (PQSTPSKDSFHPSS) shows a compositional bias: polar residues.

As to quaternary structure, homodimer. Heterodimer; efficient DNA binding requires dimerization with another bHLH protein. Interacts with ARNT; the heterodimer ARNT:AHR binds to core DNA sequence 5'-TGCGTG-3' within the dioxin response element (DRE) of target gene promoters and activates their transcription. Binds MYBBP1A. Interacts with coactivators including SRC-1, RIP140 and NOCA7, and with the corepressor SMRT. Interacts with NEDD8 and IVNS1ABP. Interacts with BMAL1. Interacts with HSP90AB1. Interacts with TIPARP; leading to mono-ADP-ribosylation of AHR and subsequent inhibition of AHR. Post-translationally, mono-ADP-ribosylated, leading to inhibit transcription activator activity of AHR. As to expression, expressed in all tissues tested including brain, heart, kidney, liver, lung, muscle, ovary, skin, spleen and thymus.

Its subcellular location is the cytoplasm. The protein localises to the nucleus. Its function is as follows. Ligand-activated transcription factor that enables cells to adapt to changing conditions by sensing compounds from the environment, diet, microbiome and cellular metabolism, and which plays important roles in development, immunity and cancer. Upon ligand binding, translocates into the nucleus, where it heterodimerizes with ARNT and induces transcription by binding to xenobiotic response elements (XRE). Regulates a variety of biological processes, including angiogenesis, hematopoiesis, drug and lipid metabolism, cell motility and immune modulation. Xenobiotics can act as ligands: upon xenobiotic-binding, activates the expression of multiple phase I and II xenobiotic chemical metabolizing enzyme genes (such as the CYP1A1 gene). Mediates biochemical and toxic effects of halogenated aromatic hydrocarbons. Next to xenobiotics, natural ligands derived from plants, microbiota, and endogenous metabolism are potent AHR agonists. Tryptophan (Trp) derivatives constitute an important class of endogenous AHR ligands. Acts as a negative regulator of anti-tumor immunity: indoles and kynurenic acid generated by Trp catabolism act as ligand and activate AHR, thereby promoting AHR-driven cancer cell motility and suppressing adaptive immunity. Regulates the circadian clock by inhibiting the basal and circadian expression of the core circadian component PER1. Inhibits PER1 by repressing the CLOCK-BMAL1 heterodimer mediated transcriptional activation of PER1. The heterodimer ARNT:AHR binds to core DNA sequence 5'-TGCGTG-3' within the dioxin response element (DRE) of target gene promoters and activates their transcription. This Mus musculus (Mouse) protein is Aryl hydrocarbon receptor (Ahr).